The chain runs to 401 residues: Nicotinate phosphoribosyltransferase (401 aa).

Phosphohistidine; by autocatalysis is present on H221.

It belongs to the NAPRTase family. Post-translationally, transiently phosphorylated on a His residue during the reaction cycle. Phosphorylation strongly increases the affinity for substrates and increases the rate of nicotinate D-ribonucleotide production. Dephosphorylation regenerates the low-affinity form of the enzyme, leading to product release.

It carries out the reaction nicotinate + 5-phospho-alpha-D-ribose 1-diphosphate + ATP + H2O = nicotinate beta-D-ribonucleotide + ADP + phosphate + diphosphate. It functions in the pathway cofactor biosynthesis; NAD(+) biosynthesis; nicotinate D-ribonucleotide from nicotinate: step 1/1. Functionally, catalyzes the synthesis of beta-nicotinate D-ribonucleotide from nicotinate and 5-phospho-D-ribose 1-phosphate at the expense of ATP. This Yersinia pseudotuberculosis serotype O:1b (strain IP 31758) protein is Nicotinate phosphoribosyltransferase.